The chain runs to 181 residues: Caveolin-1 (181 aa).

The Cytoplasmic segment spans residues 1 to 107 (MTGGLRDGEK…TKYWCYRLLT (107 aa)). Residues 108–128 (ALVGIPLALIWGIFFAILSFI) constitute an intramembrane region (helical). Residues 129 to 181 (HIWAVVPCVKSYLIEIHCISRVYSICVHTFCDPLFEAMGKCLGGVRIRTSKEV) lie on the Cytoplasmic side of the membrane. S-palmitoyl cysteine attachment occurs at residues Cys-136, Cys-146, and Cys-159.

The protein belongs to the caveolin family. In terms of assembly, homooligomer.

It localises to the golgi apparatus membrane. It is found in the cell membrane. The protein resides in the membrane. Its subcellular location is the caveola. The protein localises to the membrane raft. Functionally, may act as a positive regulator of T-cell coactivation. May act as a scaffolding protein within caveolar membranes. Interacts directly with G-protein alpha subunits and can functionally regulate their activity. The chain is Caveolin-1 (cav1) from Takifugu rubripes (Japanese pufferfish).